A 554-amino-acid chain; its full sequence is Phenylalanine--tRNA ligase beta subunit (554 aa).

The B5 domain occupies 276-351 (LTPKSRMISV…INYGYEKFEG (76 aa)). Positions 329, 335, 338, and 339 each coordinate Mg(2+).

This sequence belongs to the phenylalanyl-tRNA synthetase beta subunit family. Type 2 subfamily. Tetramer of two alpha and two beta subunits. Requires Mg(2+) as cofactor.

It is found in the cytoplasm. The enzyme catalyses tRNA(Phe) + L-phenylalanine + ATP = L-phenylalanyl-tRNA(Phe) + AMP + diphosphate + H(+). This Methanococcus maripaludis (strain C6 / ATCC BAA-1332) protein is Phenylalanine--tRNA ligase beta subunit.